Reading from the N-terminus, the 105-residue chain is U-scoloptoxin(05)-Ssd1a (105 aa).

Residues 1-24 (MKEAVKMSCLCIFVFLFLFSLTDA) form the signal peptide. Residues 79–105 (HVPESNQKDGKVSTHMSSCNTDGCNAN) are disordered. Residues 92–105 (THMSSCNTDGCNAN) show a composition bias toward polar residues.

It belongs to the scoloptoxin-05 family. Contains 4 disulfide bonds. In terms of tissue distribution, expressed by the venom gland.

It localises to the secreted. The polypeptide is U-scoloptoxin(05)-Ssd1a (Scolopendra dehaani (Thai centipede)).